We begin with the raw amino-acid sequence, 36 residues long: uncharacterized protein (36 aa).

Residues 13–35 (SVILSPFPCCVLKSYLTVIYISF) traverse the membrane as a helical segment.

It is found in the host membrane. This is an uncharacterized protein from Pseudoalteromonas espejiana (Bacteriophage PM2).